The following is a 169-amino-acid chain: Photosystem I assembly protein Ycf3 (169 aa).

3 TPR repeats span residues 36 to 69 (AFTYYRDGMSAQSEGNYAEALQNYYEAMRLEIDP), 73 to 106 (SYILYNIGLIHTRNGEHTKALEYYFRALERNPFL), and 121 to 154 (GEQAIRQGDSEIAEAWFNQAAEYWKQAIALTPGN).

Belongs to the Ycf3 family.

Its subcellular location is the plastid. The protein localises to the chloroplast thylakoid membrane. In terms of biological role, essential for the assembly of the photosystem I (PSI) complex. May act as a chaperone-like factor to guide the assembly of the PSI subunits. The sequence is that of Photosystem I assembly protein Ycf3 from Cucumis sativus (Cucumber).